Here is a 268-residue protein sequence, read N- to C-terminus: Proteasome subunit beta type-4 (268 aa).

This sequence belongs to the peptidase T1B family. The 26S proteasome consists of a 20S proteasome core and two 19S regulatory subunits. The 20S proteasome core is composed of 28 subunits that are arranged in four stacked rings, resulting in a barrel-shaped structure. The two end rings are each formed by seven alpha subunits, and the two central rings are each formed by seven beta subunits. The catalytic chamber with the active sites is on the inside of the barrel.

It localises to the cytoplasm. Its subcellular location is the nucleus. In terms of biological role, non-catalytic component of the proteasome, a multicatalytic proteinase complex which is characterized by its ability to cleave peptides with Arg, Phe, Tyr, Leu, and Glu adjacent to the leaving group at neutral or slightly basic pH. The proteasome has an ATP-dependent proteolytic activity. The protein is Proteasome subunit beta type-4 (Prosbeta7) of Drosophila melanogaster (Fruit fly).